Consider the following 171-residue polypeptide: Phosphopantetheine adenylyltransferase (171 aa).

A substrate-binding site is contributed by Thr10. Residues 10–11 (TF) and His18 each bind ATP. Residues Lys42, Thr74, and Arg88 each coordinate substrate. ATP-binding positions include 89–91 (GLR), Glu99, and 124–130 (WACLSSK).

Belongs to the bacterial CoaD family. As to quaternary structure, homohexamer. Mg(2+) is required as a cofactor.

It localises to the cytoplasm. It carries out the reaction (R)-4'-phosphopantetheine + ATP + H(+) = 3'-dephospho-CoA + diphosphate. It participates in cofactor biosynthesis; coenzyme A biosynthesis; CoA from (R)-pantothenate: step 4/5. Reversibly transfers an adenylyl group from ATP to 4'-phosphopantetheine, yielding dephospho-CoA (dPCoA) and pyrophosphate. In Blochmanniella pennsylvanica (strain BPEN), this protein is Phosphopantetheine adenylyltransferase.